The sequence spans 379 residues: Dual-specificity RNA methyltransferase RlmN (379 aa).

Residue Glu-95 is the Proton acceptor of the active site. One can recognise a Radical SAM core domain in the interval 101–345; the sequence is EETRGTLCVS…TTVRKTRGDD (245 aa). Cysteines 108 and 350 form a disulfide. Cys-115, Cys-119, and Cys-122 together coordinate [4Fe-4S] cluster. S-adenosyl-L-methionine contacts are provided by residues 176-177, Ser-208, 230-232, and Asn-307; these read GE and SLH. The S-methylcysteine intermediate role is filled by Cys-350.

The protein belongs to the radical SAM superfamily. RlmN family. [4Fe-4S] cluster is required as a cofactor.

The protein localises to the cytoplasm. The enzyme catalyses adenosine(2503) in 23S rRNA + 2 reduced [2Fe-2S]-[ferredoxin] + 2 S-adenosyl-L-methionine = 2-methyladenosine(2503) in 23S rRNA + 5'-deoxyadenosine + L-methionine + 2 oxidized [2Fe-2S]-[ferredoxin] + S-adenosyl-L-homocysteine. It catalyses the reaction adenosine(37) in tRNA + 2 reduced [2Fe-2S]-[ferredoxin] + 2 S-adenosyl-L-methionine = 2-methyladenosine(37) in tRNA + 5'-deoxyadenosine + L-methionine + 2 oxidized [2Fe-2S]-[ferredoxin] + S-adenosyl-L-homocysteine. In terms of biological role, specifically methylates position 2 of adenine 2503 in 23S rRNA and position 2 of adenine 37 in tRNAs. m2A2503 modification seems to play a crucial role in the proofreading step occurring at the peptidyl transferase center and thus would serve to optimize ribosomal fidelity. This chain is Dual-specificity RNA methyltransferase RlmN, found in Burkholderia cenocepacia (strain ATCC BAA-245 / DSM 16553 / LMG 16656 / NCTC 13227 / J2315 / CF5610) (Burkholderia cepacia (strain J2315)).